Consider the following 118-residue polypeptide: Large ribosomal subunit protein uL18 (118 aa).

The protein belongs to the universal ribosomal protein uL18 family. In terms of assembly, part of the 50S ribosomal subunit; part of the 5S rRNA/L5/L18/L25 subcomplex. Contacts the 5S and 23S rRNAs.

Functionally, this is one of the proteins that bind and probably mediate the attachment of the 5S RNA into the large ribosomal subunit, where it forms part of the central protuberance. The sequence is that of Large ribosomal subunit protein uL18 from Nitrosospira multiformis (strain ATCC 25196 / NCIMB 11849 / C 71).